The sequence spans 528 residues: Glucose transporter 1E (528 aa).

Residues 1 to 22 (MTERRDNVSHAPDAIEGPNDGA) are disordered. The Cytoplasmic segment spans residues 1 to 43 (MTERRDNVSHAPDAIEGPNDGAHAEETSPGFFSFENLGVAQVQ). A helical transmembrane segment spans residues 44-64 (VVGGTLNGYVIGYVAVYLLLY). Topologically, residues 65–118 (LTATECKFTTEGACGGRKIYGCKWSGTTCKFENPKCSEGSDPSDSCKNEVAYTS) are extracellular. Residues 119-139 (VYSGIFACAMIVGSMVGSIIA) traverse the membrane as a helical segment. The Cytoplasmic segment spans residues 140–151 (GKCITTFGLKKS). A helical membrane pass occupies residues 152 to 172 (FIIVSITCTIACVVVQVAIEY). The Extracellular segment spans residues 173-175 (NNY). The helical transmembrane segment at 176-196 (YALCTGRVLIGLGVGILCSVF) threads the bilayer. Topologically, residues 197–213 (PMYVNENAHPKLCKMDG) are cytoplasmic. The chain crosses the membrane as a helical span at residues 214 to 234 (VLFQVFTTLGIMLAAMLGLIL). Over 235-250 (DKTGASKEEANMAGRL) the chain is Extracellular. The chain crosses the membrane as a helical span at residues 251–271 (HVFSAVPLGLSVAMFLVGMFL). At 272 to 301 (RESTATFAQDDDGKADGGMDPNEYGWGQML) the chain is on the cytoplasmic side. Residues 302-322 (WPLFMGAVTAGTLQLTGINAV) form a helical membrane-spanning segment. Topologically, residues 323-338 (MNYAPKITENLGMDPS) are extracellular. A helical transmembrane segment spans residues 339–359 (LGNFLVMAWNFVTSLVAIPLA). Residues 360-367 (SRFTMRQM) are Cytoplasmic-facing. A helical membrane pass occupies residues 368-388 (FITCSFVASCMCLFLCGIPVF). At 389 to 403 (PGVAEEKVKNGVATT) the chain is on the extracellular side. The helical transmembrane segment at 404–424 (GIALFIAAFEFGVGSCFFVLA) threads the bilayer. Over 425–438 (QDLFPPSFRPKGSS) the chain is Cytoplasmic. Residues 439-459 (FVVMMQFIFNILINLLYPITT) form a helical membrane-spanning segment. Topologically, residues 460-475 (EAISGGATGDQDKGQA) are extracellular. The chain crosses the membrane as a helical span at residues 476 to 496 (VVFILFGLIGLICFVLQFFYL). Topologically, residues 497–528 (YPYDANQDHENDHGTEPVERILSPVDVPTPRN) are cytoplasmic. The tract at residues 507–528 (NDHGTEPVERILSPVDVPTPRN) is disordered.

Belongs to the major facilitator superfamily. Sugar transporter (TC 2.A.1.1) family.

Its subcellular location is the membrane. Facilitative glucose transporter. In Trypanosoma brucei brucei, this protein is Glucose transporter 1E (THT1E).